The primary structure comprises 304 residues: Dihydroorotate dehydrogenase B (NAD(+)), catalytic subunit (304 aa).

FMN contacts are provided by residues Ser-21 and Lys-45–Ala-46. Substrate contacts are provided by residues Lys-45 and Asn-69 to Leu-73. Positions 99 and 127 each coordinate FMN. Asn-127 provides a ligand contact to substrate. Cys-130 (nucleophile) is an active-site residue. Positions 165 and 191 each coordinate FMN. Asn-192 to Thr-193 is a substrate binding site. Residues Gly-217, Gly-243–Gly-244, and Gly-265–Thr-266 contribute to the FMN site.

This sequence belongs to the dihydroorotate dehydrogenase family. Type 1 subfamily. Heterotetramer of 2 PyrK and 2 PyrD type B subunits. The cofactor is FMN.

The protein localises to the cytoplasm. It carries out the reaction (S)-dihydroorotate + NAD(+) = orotate + NADH + H(+). It functions in the pathway pyrimidine metabolism; UMP biosynthesis via de novo pathway; orotate from (S)-dihydroorotate (NAD(+) route): step 1/1. Functionally, catalyzes the conversion of dihydroorotate to orotate with NAD(+) as electron acceptor. The sequence is that of Dihydroorotate dehydrogenase B (NAD(+)), catalytic subunit (pyrD) from Listeria monocytogenes serotype 4b (strain F2365).